Here is a 336-residue protein sequence, read N- to C-terminus: F420-dependent glucose-6-phosphate dehydrogenase (336 aa).

Asp39 lines the coenzyme F420-(gamma-Glu)n pocket. His40 (proton donor) is an active-site residue. Residues Thr76 and 107 to 108 contribute to the coenzyme F420-(gamma-Glu)n site; that span reads TG. Glu109 acts as the Proton acceptor in catalysis. Coenzyme F420-(gamma-Glu)n is bound by residues Asn112, 177–178, and 180–181; these read GG and EV. The substrate site is built by Thr195, Lys198, Lys259, and Arg283.

Belongs to the F420-dependent glucose-6-phosphate dehydrogenase family. As to quaternary structure, homodimer.

It catalyses the reaction oxidized coenzyme F420-(gamma-L-Glu)(n) + D-glucose 6-phosphate + H(+) = 6-phospho-D-glucono-1,5-lactone + reduced coenzyme F420-(gamma-L-Glu)(n). Its function is as follows. Catalyzes the coenzyme F420-dependent oxidation of glucose 6-phosphate (G6P) to 6-phosphogluconolactone. Appears to have a role in resistance to oxidative stress, via its consumption of G6P that serves as a source of reducing power to combat oxidative stress in mycobacteria. The protein is F420-dependent glucose-6-phosphate dehydrogenase of Mycobacterium leprae (strain Br4923).